Reading from the N-terminus, the 2327-residue chain is Pre-mRNA-processing-splicing factor 8 homolog (2327 aa).

The segment covering 1-14 has biased composition (polar residues); that stretch reads MDDTNSNINQSNES. The tract at residues 1–20 is disordered; sequence MDDTNSNINQSNESQHLEEK. The segment at 801-1292 is reverse transcriptase homology domain; sequence TTVHWLEKRR…KIQTRVKIGL (492 aa). The segment at 1293–1566 is linker; the sequence is NSKMPNRFPP…TLKISLIQIF (274 aa). The important for branch point selection stretch occupies residues 1502 to 1515; that stretch reads MKYKKLTHAQRSGL. A restriction endonuclease homology domain region spans residues 1570-1740; sequence LWQKIHESLV…LRERIRKGLQ (171 aa). The segment at 1657–2023 is involved in interaction with pre-mRNA 5' splice site; that stretch reads GDFDSHDIER…QIAEIEKQKT (367 aa). The RNase H homology domain stretch occupies residues 1755 to 2008; sequence NFGELFSNKI…ILGMEISAPS (254 aa). In terms of domain architecture, MPN spans 2093–2223; that stretch reads TYVFPKNILK…LTAYHLTPSG (131 aa).

Part of the U5 snRNP complex and of the U4/U6-U5 tri-snRNP complex.

The protein localises to the nucleus speckle. In terms of biological role, functions as a scaffold that mediates the ordered assembly of spliceosomal proteins and snRNAs. Required for the assembly of the U4/U6-U5 tri-snRNP complex. Functions as a scaffold that positions spliceosomal U2, U5 and U6 snRNAs at splice sites on pre-mRNA substrates, so that splicing can occur. Interacts with both the 5' and the 3' splice site. In Dictyostelium discoideum (Social amoeba), this protein is Pre-mRNA-processing-splicing factor 8 homolog (prpf8).